The following is a 380-amino-acid chain: MSHKTKSTTQERKAGKSSAPQRQVVSKSSLQKKVSKPTATAKLQKSKALHPRNAHNNGYDFAALVTAFPKLKAFVKPNPYGNLSIDFADPVAVKMLNAALLKFHYGVGHWDIPDGFLCPPIPGRADYIHHVADLLAVKKSSKKRIPKGPKVRVLDIGTGANVIYPLLGIQSYGWDFVGSDVDPLSIANAQQIFAGNSDIANKFSSRLQADSKHVFHGVIEANERFDLTLCNPPFHASLAEASEGTARKLKNLAANRAKSSQVMSPQVQPSGKVKPATDKNHGVLNFGGQKAELWCEGGELQFLRTMIEESHDFASQCLWFTTLVSKKENLNPAKALLAKIKAEEVKEIEMHQGNKITRVLAWTFLKPEQRELWVQYRDAQ.

2 disordered regions span residues M1 to A54 and S260 to K279. A compositionally biased stretch (low complexity) spans Q21–K32. Residues Q44–N53 show a composition bias toward basic residues. Low complexity predominate over residues S260–S270.

Belongs to the methyltransferase superfamily. METTL16/RlmF family.

It localises to the cytoplasm. It catalyses the reaction adenosine(1618) in 23S rRNA + S-adenosyl-L-methionine = N(6)-methyladenosine(1618) in 23S rRNA + S-adenosyl-L-homocysteine + H(+). Its function is as follows. Specifically methylates the adenine in position 1618 of 23S rRNA. The chain is Ribosomal RNA large subunit methyltransferase F from Shewanella pealeana (strain ATCC 700345 / ANG-SQ1).